The following is a 358-amino-acid chain: 3-isopropylmalate dehydrogenase (358 aa).

Residues arginine 92, arginine 102, arginine 130, and aspartate 224 each coordinate substrate. Residues aspartate 224, aspartate 248, and aspartate 252 each contribute to the Mg(2+) site. 282–294 serves as a coordination point for NAD(+); the sequence is GSAPDIAGQGIAN.

This sequence belongs to the isocitrate and isopropylmalate dehydrogenases family. LeuB type 1 subfamily. In terms of assembly, homodimer. Mg(2+) serves as cofactor. It depends on Mn(2+) as a cofactor.

The protein localises to the cytoplasm. It carries out the reaction (2R,3S)-3-isopropylmalate + NAD(+) = 4-methyl-2-oxopentanoate + CO2 + NADH. Its pathway is amino-acid biosynthesis; L-leucine biosynthesis; L-leucine from 3-methyl-2-oxobutanoate: step 3/4. Catalyzes the oxidation of 3-carboxy-2-hydroxy-4-methylpentanoate (3-isopropylmalate) to 3-carboxy-4-methyl-2-oxopentanoate. The product decarboxylates to 4-methyl-2 oxopentanoate. The sequence is that of 3-isopropylmalate dehydrogenase from Bordetella avium (strain 197N).